Here is a 1194-residue protein sequence, read N- to C-terminus: DNA polymerase catalytic subunit (1194 aa).

This sequence belongs to the DNA polymerase type-B family. As to quaternary structure, forms a complex with the ssDNA-binding protein, the DNA polymerase processivity factor, and the alkaline exonuclease. Interacts with the helicase-primase complex composed of the primase, the helicase and the primase-associated factor; this interaction may coordinate leading and lagging strand DNA synthesis at the replication fork.

It localises to the host nucleus. The enzyme catalyses DNA(n) + a 2'-deoxyribonucleoside 5'-triphosphate = DNA(n+1) + diphosphate. It catalyses the reaction Endonucleolytic cleavage to 5'-phosphomonoester.. Replicates viral genomic DNA. The replication complex is composed of six viral proteins: the DNA polymerase, processivity factor, primase, primase-associated factor, helicase, and ssDNA-binding protein. Additionally, the polymerase contains an intrinsic ribonuclease H (RNase H) activity that specifically degrades RNA/DNA heteroduplexes or duplex DNA substrates in the 5' to 3' direction. Therefore, it can catalyze the excision of the RNA primers that initiate the synthesis of Okazaki fragments at a replication fork during viral DNA replication. The sequence is that of DNA polymerase catalytic subunit from Varicella-zoster virus (strain Dumas) (HHV-3).